The sequence spans 72 residues: MNNNNFDMEKFKKLAAIVSEGEIDEMLDETTVGAASTLPCAEVVVTVTGIIVKATTGFDWCPTGACTHSCRF.

Residues Met-1 to Ala-34 constitute a propeptide, cleaved by FlvT. A cross-link (lanthionine (Ser-Cys); by FlvM2) is located at residues Ser-36–Cys-40. 2,3-didehydrobutyrine; by FlvM2 occurs at positions 37, 46, and 48. 3 consecutive cross-links (beta-methyllanthionine (Thr-Cys); by FlvM2) follow at residues Thr-55–Cys-61, Thr-63–Cys-66, and Thr-67–Cys-70.

Post-translationally, contains LL-lanthionine and DL-beta-methyllanthionine, when coepressed in E.coli with the flavecin synthetase FlvM2.

The protein localises to the secreted. In terms of biological role, lanthionine-containing peptide antibiotic (lantibiotic) that is probably weakly active on Gram-positive bacteria, since its analog [Del1]Flvbeta.g shows weak antibacterial activity against M.luteus. This activity is synergistically enhanced by [Del2]Flvalpha.a, an analog of Flvalpha.a, which is encoded by the same operon than Flvbeta.g. The bactericidal activity of lantibiotics is based on depolarization of energized bacterial cytoplasmic membranes, initiated by the formation of aqueous transmembrane pores. The protein is Lantibiotic Flvbeta.g of Ruminococcus flavefaciens.